A 367-amino-acid polypeptide reads, in one-letter code: Uptake hydrogenase small subunit (367 aa).

The tat-type signal signal peptide spans 1–45 (MTPTETFYEVMRRQGVTRRSFLKFCSLTATALGLGPAYTSEIAHA). 8 residues coordinate [4Fe-4S] cluster: Cys-62, Cys-65, Cys-160, Cys-194, His-232, Cys-235, Cys-260, and Cys-266. Positions 275, 294, and 297 each coordinate [3Fe-4S] cluster.

The protein belongs to the [NiFe]/[NiFeSe] hydrogenase small subunit family. As to quaternary structure, heterodimer of a large and a small subunit. The cofactor is [4Fe-4S] cluster. [3Fe-4S] cluster serves as cofactor. In terms of processing, predicted to be exported by the Tat system. The position of the signal peptide cleavage has been experimentally proven.

It is found in the cell membrane. The catalysed reaction is H2 + A = AH2. This enzyme recycles the H(2) produced by nitrogenase to increase the production of ATP and to protect nitrogenase against inhibition or damage by O(2) under carbon- or phosphate-limited conditions. The protein is Uptake hydrogenase small subunit (hoxS) of Afipia carboxidovorans (strain ATCC 49405 / DSM 1227 / KCTC 32145 / OM5) (Oligotropha carboxidovorans).